Here is a 501-residue protein sequence, read N- to C-terminus: MSERCCSRYSSGASIGCTPTSTQAKMVSKRIAQETFDAAVRENIEEFAMGPEEAVKEAVEQFESQGVDLSNIVKTAPKVSADGSQEPTHDILQMLSDLQESVASSRPQEVSAYLTRFCDQCKQDKACRFLAAQKGAYPIIFTAWKLATAGDQGLLLQSLNALSVLTDGQPDLLDAQGLQLLVATLTQNADEADLTCSGIRCVRHACLKHEQNRQDLVKAGVLPLLTGAITHHGHHTDVVREACWALRVMTFDDDIRVPFGHAHNHAKMIVQENKGLKVLIEATKAFLDNPGILSELCGTLSRLAIRNEFCQEVVDLGGLSILVSLLADCNDHQMRDQSGVQELVKQVLSTLRAIAGNDDVKDAIVRAGGTESIVAAMTQHLTSPQVCEQSCAALCFLALRKPDNSRIIVEGGGAVAALQAMKAHPQKAGVQKQACMLIRNLVAHGQAFSKPILDLGAEALIMQARSAHRDCEDVAKAALRDLGCHVELRELWTGQRGNLAP.

Ser64 carries the post-translational modification Phosphoserine. ARM repeat units follow at residues 220–264 (GVLP…HAHN), 274–318 (KGLK…DLGG), 319–369 (LSIL…RAGG), and 370–412 (TESI…VEGG). His263 is subject to Pros-methylhistidine.

Belongs to the ARMC6 family. Post-translationally, methylated at His-263 by METTL9.

The protein is Armadillo repeat-containing protein 6 (ARMC6) of Homo sapiens (Human).